The sequence spans 462 residues: Cysteine--tRNA ligase (462 aa).

A Zn(2+)-binding site is contributed by C28. A 'HIGH' region motif is present at residues 30 to 40 (MTVYDYCHIGH). Zn(2+) is bound by residues C209, H234, and E238. The short motif at 266–270 (KMSKS) is the 'KMSKS' region element. K269 contacts ATP.

Belongs to the class-I aminoacyl-tRNA synthetase family. As to quaternary structure, monomer. It depends on Zn(2+) as a cofactor.

It localises to the cytoplasm. It carries out the reaction tRNA(Cys) + L-cysteine + ATP = L-cysteinyl-tRNA(Cys) + AMP + diphosphate. This Pseudomonas fluorescens (strain SBW25) protein is Cysteine--tRNA ligase.